The sequence spans 160 residues: Small ribosomal subunit protein uS7 (160 aa).

It belongs to the universal ribosomal protein uS7 family. As to quaternary structure, part of the 30S ribosomal subunit. Contacts proteins S9 and S11.

Its function is as follows. One of the primary rRNA binding proteins, it binds directly to 16S rRNA where it nucleates assembly of the head domain of the 30S subunit. Is located at the subunit interface close to the decoding center, probably blocks exit of the E-site tRNA. The sequence is that of Small ribosomal subunit protein uS7 from Ehrlichia ruminantium (strain Gardel).